We begin with the raw amino-acid sequence, 1438 residues long: Lysophospholipase NTE1 (1438 aa).

Residues 1–25 (MDSDTSSADFHSTETLVSTPKYSYG) are Cytoplasmic-facing. A helical membrane pass occupies residues 26-46 (VLINVILLVSWTCFRVVNWFL). The Lumenal segment spans residues 47-64 (VTLPSILLGMLSKTFQIT). A helical membrane pass occupies residues 65–85 (LSLSSILMFVVAVTAICFLVV). The Cytoplasmic portion of the chain corresponds to 86 to 1438 (RYKYLTRYSR…HVSLSRRNSI (1353 aa)). The segment covering 432–450 (YETQTIPNESEDSPTIQRS) has biased composition (polar residues). The interval 432–464 (YETQTIPNESEDSPTIQRSSLRRRASHSTSLRK) is disordered. A nucleoside 3',5'-cyclic phosphate is bound by residues 590–720 (GDDS…LTID) and 707–856 (RLKR…VANR). One can recognise a PNPLA domain in the interval 1131–1295 (LVLGGGGSRG…LDNLPVSEMK (165 aa)). Positions 1135-1140 (GGGSRG) match the GXGXXG motif. Residues 1162-1166 (GTSIG) carry the GXSXG motif. S1164 (nucleophile) is an active-site residue. D1282 acts as the Proton acceptor in catalysis. Residues 1282–1284 (DGG) carry the DGA/G motif.

Belongs to the NTE family.

It localises to the endoplasmic reticulum membrane. The catalysed reaction is a 1-acyl-sn-glycero-3-phosphocholine + H2O = sn-glycerol 3-phosphocholine + a fatty acid + H(+). Inhibited by organophosphorus esters. Intracellular phospholipase B that catalyzes the double deacylation of phosphatidylcholine (PC) to glycerophosphocholine (GroPCho). Plays an important role in membrane lipid homeostasis. Responsible for the rapid PC turnover in response to inositol, elevated temperatures, or when choline is present in the growth medium. This chain is Lysophospholipase NTE1 (NTE1), found in Meyerozyma guilliermondii (strain ATCC 6260 / CBS 566 / DSM 6381 / JCM 1539 / NBRC 10279 / NRRL Y-324) (Yeast).